Here is a 117-residue protein sequence, read N- to C-terminus: Ribosome-binding factor A (117 aa).

It belongs to the RbfA family. Monomer. Binds 30S ribosomal subunits, but not 50S ribosomal subunits or 70S ribosomes.

The protein resides in the cytoplasm. Functionally, one of several proteins that assist in the late maturation steps of the functional core of the 30S ribosomal subunit. Associates with free 30S ribosomal subunits (but not with 30S subunits that are part of 70S ribosomes or polysomes). Required for efficient processing of 16S rRNA. May interact with the 5'-terminal helix region of 16S rRNA. The protein is Ribosome-binding factor A of Nitrosomonas eutropha (strain DSM 101675 / C91 / Nm57).